The following is a 560-amino-acid chain: Dihydroxy-acid dehydratase (560 aa).

Asp78 is a Mg(2+) binding site. Residue Cys119 participates in [2Fe-2S] cluster binding. The Mg(2+) site is built by Asp120 and Lys121. Lys121 bears the N6-carboxylysine mark. Cys192 serves as a coordination point for [2Fe-2S] cluster. Glu446 is a Mg(2+) binding site. Ser472 acts as the Proton acceptor in catalysis.

Belongs to the IlvD/Edd family. Homodimer. It depends on [2Fe-2S] cluster as a cofactor. Requires Mg(2+) as cofactor.

It catalyses the reaction (2R)-2,3-dihydroxy-3-methylbutanoate = 3-methyl-2-oxobutanoate + H2O. The catalysed reaction is (2R,3R)-2,3-dihydroxy-3-methylpentanoate = (S)-3-methyl-2-oxopentanoate + H2O. It participates in amino-acid biosynthesis; L-isoleucine biosynthesis; L-isoleucine from 2-oxobutanoate: step 3/4. The protein operates within amino-acid biosynthesis; L-valine biosynthesis; L-valine from pyruvate: step 3/4. Functions in the biosynthesis of branched-chain amino acids. Catalyzes the dehydration of (2R,3R)-2,3-dihydroxy-3-methylpentanoate (2,3-dihydroxy-3-methylvalerate) into 2-oxo-3-methylpentanoate (2-oxo-3-methylvalerate) and of (2R)-2,3-dihydroxy-3-methylbutanoate (2,3-dihydroxyisovalerate) into 2-oxo-3-methylbutanoate (2-oxoisovalerate), the penultimate precursor to L-isoleucine and L-valine, respectively. The chain is Dihydroxy-acid dehydratase from Anaeromyxobacter sp. (strain K).